Reading from the N-terminus, the 259-residue chain is 3-deoxy-manno-octulosonate cytidylyltransferase (259 aa).

It belongs to the KdsB family.

Its subcellular location is the cytoplasm. The enzyme catalyses 3-deoxy-alpha-D-manno-oct-2-ulosonate + CTP = CMP-3-deoxy-beta-D-manno-octulosonate + diphosphate. It functions in the pathway nucleotide-sugar biosynthesis; CMP-3-deoxy-D-manno-octulosonate biosynthesis; CMP-3-deoxy-D-manno-octulosonate from 3-deoxy-D-manno-octulosonate and CTP: step 1/1. The protein operates within bacterial outer membrane biogenesis; lipopolysaccharide biosynthesis. Functionally, activates KDO (a required 8-carbon sugar) for incorporation into bacterial lipopolysaccharide in Gram-negative bacteria. In Nitrosococcus oceani (strain ATCC 19707 / BCRC 17464 / JCM 30415 / NCIMB 11848 / C-107), this protein is 3-deoxy-manno-octulosonate cytidylyltransferase.